The following is a 349-amino-acid chain: Thylakoid lumenal 29 kDa protein, chloroplastic (349 aa).

A Phosphoserine modification is found at S155.

It belongs to the peroxidase family.

Its subcellular location is the plastid. It localises to the chloroplast thylakoid lumen. This chain is Thylakoid lumenal 29 kDa protein, chloroplastic (TL29), found in Arabidopsis thaliana (Mouse-ear cress).